A 380-amino-acid polypeptide reads, in one-letter code: Cytochrome b (380 aa).

4 helical membrane-spanning segments follow: residues 34–54 (FGSL…LLAM), 78–99 (WLIR…FLHI), 114–134 (WNTG…GYVL), and 179–199 (FFAL…IHLT). Residues His-84 and His-98 each coordinate heme b. Heme b is bound by residues His-183 and His-197. Residue His-202 coordinates a ubiquinone. The next 4 helical transmembrane spans lie at 227–247 (IKDI…ALFS), 289–309 (LGGV…PFLH), 321–341 (LSQT…WIGS), and 348–368 (FIII…ILFP).

This sequence belongs to the cytochrome b family. The cytochrome bc1 complex contains 11 subunits: 3 respiratory subunits (MT-CYB, CYC1 and UQCRFS1), 2 core proteins (UQCRC1 and UQCRC2) and 6 low-molecular weight proteins (UQCRH/QCR6, UQCRB/QCR7, UQCRQ/QCR8, UQCR10/QCR9, UQCR11/QCR10 and a cleavage product of UQCRFS1). This cytochrome bc1 complex then forms a dimer. Heme b serves as cofactor.

The protein localises to the mitochondrion inner membrane. Its function is as follows. Component of the ubiquinol-cytochrome c reductase complex (complex III or cytochrome b-c1 complex) that is part of the mitochondrial respiratory chain. The b-c1 complex mediates electron transfer from ubiquinol to cytochrome c. Contributes to the generation of a proton gradient across the mitochondrial membrane that is then used for ATP synthesis. This is Cytochrome b (MT-CYB) from Alectoris chukar (Chukar partridge).